The following is a 525-amino-acid chain: NGFI-A-binding protein 2 (525 aa).

Residues 1-22 form a disordered region; that stretch reads MHRAPSPTAEQPPGGGDSARRT. Serine 6 carries the phosphoserine modification. An NCD1 region spans residues 35–113; that stretch reads ALPRTLGELQ…REWATNPGLF (79 aa). Residues 135–237 are disordered; it reads GTRKGSMSNG…GGTGGGPDRL (103 aa). Phosphoserine occurs at positions 157, 159, 162, and 171. A compositionally biased stretch (gly residues) spans 212-234; it reads AGGGVPEGTGAGGLAAGGTGGGP. An NCD2 region spans residues 267 to 356; the sequence is LLKLNKKLAR…SRQVARESTY (90 aa). A necessary for nuclear localization region spans residues 353 to 384; sequence ESTYLSSLKGSRLHPEELGGPPLKKLKQEVGE. A Glycyl lysine isopeptide (Lys-Gly) (interchain with G-Cter in SUMO1) cross-link involves residue lysine 379. A disordered region spans residues 380–416; the sequence is QEVGEQSHPEIQQPPPGPESYVPPYRPSLEEDSASLS. Serine 479 is modified (phosphoserine). The tract at residues 502 to 525 is disordered; the sequence is PGPHPALVEGRRSSVKVEAEASRQ. The segment covering 510 to 525 has biased composition (basic and acidic residues); sequence EGRRSSVKVEAEASRQ. Lysine 517 participates in a covalent cross-link: Glycyl lysine isopeptide (Lys-Gly) (interchain with G-Cter in SUMO1); alternate. Lysine 517 participates in a covalent cross-link: Glycyl lysine isopeptide (Lys-Gly) (interchain with G-Cter in SUMO2); alternate.

This sequence belongs to the NAB family. In terms of assembly, homomultimers may associate with EGR1 bound to DNA. Post-translationally, sumoylation by EGR2 represses EGR2 transcriptional activity in hindbrain. Widely expressed at low levels. Highly expressed in melanoma cell lines.

It localises to the nucleus. In terms of biological role, acts as a transcriptional repressor for zinc finger transcription factors EGR1 and EGR2. Isoform 2 lacks repression ability. The protein is NGFI-A-binding protein 2 (NAB2) of Homo sapiens (Human).